A 134-amino-acid chain; its full sequence is MLSPKRTKYRRYHRGRMKGKAMRGNKLTYGDFALQSLEPGWLTSRQIEAGRRVLTRYVRRTGKLWIRIFPDKPITMRPADTRMGKGKGAPEFWVAVVKPGTMIYEITGVTEPIARSAMRITAYKMPVKTQFVAR.

It belongs to the universal ribosomal protein uL16 family. Part of the 50S ribosomal subunit.

The protein localises to the plastid. Its subcellular location is the chloroplast. The chain is Large ribosomal subunit protein uL16c from Oltmannsiellopsis viridis (Marine flagellate).